Consider the following 359-residue polypeptide: Guanine nucleotide-binding protein subunit alpha-11 (359 aa).

2 S-palmitoyl cysteine lipidation sites follow: Cys9 and Cys10. The 322-residue stretch at 38 to 359 (RELKLLLLGT…QLNLKEYNLV (322 aa)) folds into the G-alpha domain. The segment at 41–54 (KLLLLGTGESGKST) is G1 motif. GTP is bound by residues 46–53 (GTGESGKS) and 180–183 (LRVR). Ser53 provides a ligand contact to Mg(2+). Positions 178-186 (DVLRVRVPT) are G2 motif. Thr186 contacts Mg(2+). Positions 201–210 (FRMVDVGGQR) are G3 motif. Residues 270–277 (ILFLNKKD) form a G4 motif region. Residues 274-277 (NKKD) and Ala331 contribute to the GTP site. The tract at residues 329–334 (TCATDT) is G5 motif.

The protein belongs to the G-alpha family. G(q) subfamily. In terms of assembly, g proteins are composed of 3 units; alpha, beta and gamma. The alpha chain contains the guanine nucleotide binding site. Interacts with RGS22. Interacts with NTSR1.

It localises to the cell membrane. The protein resides in the cytoplasm. It catalyses the reaction GTP + H2O = GDP + phosphate + H(+). Its function is as follows. Guanine nucleotide-binding proteins (G proteins) function as transducers downstream of G protein-coupled receptors (GPCRs) in numerous signaling cascades. The alpha chain contains the guanine nucleotide binding site and alternates between an active, GTP-bound state and an inactive, GDP-bound state. Signaling by an activated GPCR promotes GDP release and GTP binding. The alpha subunit has a low GTPase activity that converts bound GTP to GDP, thereby terminating the signal. Both GDP release and GTP hydrolysis are modulated by numerous regulatory proteins. Signaling is mediated via phospholipase C-beta-dependent inositol lipid hydrolysis for signal propagation: activates phospholipase C-beta: following GPCR activation, GNA11 activates PLC-beta (PLCB1, PLCB2, PLCB3 or PLCB4), leading to production of diacylglycerol (DAG) and inositol 1,4,5-trisphosphate (IP3). Transduces FFAR4 signaling in response to long-chain fatty acids (LCFAs). Together with GNAQ, required for heart development. In the respiratory epithelium, transmits OXGR1-dependent signals that lead to downstream intracellular Ca(2+) release and mucocilliary clearance of airborne pathogens. This is Guanine nucleotide-binding protein subunit alpha-11 (GNA11) from Bos taurus (Bovine).